Reading from the N-terminus, the 557-residue chain is Urocanate hydratase (557 aa).

Residues Gly53–Gly54, Gln131, Gly177–Gly179, Glu197, Asn243–Ala244, Gln264–His268, Tyr274–Leu275, and Tyr323 contribute to the NAD(+) site. The active site involves Cys411. Gly493 is a binding site for NAD(+).

Belongs to the urocanase family. It depends on NAD(+) as a cofactor.

The protein localises to the cytoplasm. The catalysed reaction is 4-imidazolone-5-propanoate = trans-urocanate + H2O. The protein operates within amino-acid degradation; L-histidine degradation into L-glutamate; N-formimidoyl-L-glutamate from L-histidine: step 2/3. In terms of biological role, catalyzes the conversion of urocanate to 4-imidazolone-5-propionate. In Mesorhizobium japonicum (strain LMG 29417 / CECT 9101 / MAFF 303099) (Mesorhizobium loti (strain MAFF 303099)), this protein is Urocanate hydratase.